We begin with the raw amino-acid sequence, 126 residues long: Fluoride-specific ion channel FluC 1 (126 aa).

Helical transmembrane passes span 5-25 (FILA…LVGI), 39-59 (TLFI…LFAI), 69-89 (IFLI…SLDS), and 100-120 (AAGA…IAGI). Residues G77 and T80 each contribute to the Na(+) site.

It belongs to the fluoride channel Fluc/FEX (TC 1.A.43) family.

Its subcellular location is the cell inner membrane. The catalysed reaction is fluoride(in) = fluoride(out). Na(+) is not transported, but it plays an essential structural role and its presence is essential for fluoride channel function. In terms of biological role, fluoride-specific ion channel. Important for reducing fluoride concentration in the cell, thus reducing its toxicity. The protein is Fluoride-specific ion channel FluC 1 of Nitrobacter hamburgensis (strain DSM 10229 / NCIMB 13809 / X14).